A 180-amino-acid polypeptide reads, in one-letter code: Fucolectin-3 (180 aa).

An N-terminal signal peptide occupies residues 1–22 (MEVKMIILLFQILAISTLKSDS). An F5/8 type C-like region spans residues 31–179 (QENVALRGRA…VEVNVLFPAP (149 aa)). Residues Asn-58, Asp-61, Asn-63, and Ser-72 each coordinate Ca(2+). Cystine bridges form between Cys-73–Cys-168, Cys-104–Cys-105, and Cys-130–Cys-146. Positions 75 and 101 each coordinate alpha-L-fucose. A Cell attachment site motif is present at residues 101–103 (RGD). Residue Arg-108 coordinates alpha-L-fucose. Positions 168 and 169 each coordinate Ca(2+).

Belongs to the fucolectin family. In terms of assembly, homotrimer. Parenchymal hepatocytes.

Its subcellular location is the secreted. It localises to the extracellular space. Its function is as follows. Acts as a defensive agent. Recognizes blood group fucosylated oligosaccharides including A, B, H and Lewis B-type antigens. Does not recognize Lewis A antigen and has low affinity for monovalent haptens. This chain is Fucolectin-3, found in Anguilla japonica (Japanese eel).